Reading from the N-terminus, the 551-residue chain is Solute carrier family 22 member 3 (551 aa).

The chain crosses the membrane as a helical span at residues V21–F41. N-linked (GlcNAc...) asparagine glycosylation is found at N72, N99, and N114. A helical membrane pass occupies residues L177–A197. N199 is a glycosylation site (N-linked (GlcNAc...) asparagine). 2 helical membrane-spanning segments follow: residues I236–A256 and G264–P284. The short motif at P284 to R288 is the Proline-rich sequence element. A glycan (N-linked (GlcNAc...) asparagine) is linked at N317. Helical transmembrane passes span I376–I396, G464–F484, and L493–P513.

Belongs to the major facilitator (TC 2.A.1) superfamily. Organic cation transporter (TC 2.A.1.19) family. Highly expressed in placenta. Highly expressed in kidney cortex. In kidney, expressed specifically in the proximal and distal convoluted tubules and within Bowman capsule. Expressed in brain, particularly in dopaminergic neurons of the substantia nigra compacta, non-aminergic neurons of the ventral tegmental area, substantia nigra reticulata, locus coeruleus, hippocampus and cortex. In brain, also detected in astrocytes in the substantia nigra reticulata, several hypothalamic nuclei and nigrostriatal region. Expressed in neurons and glial cells of amygdala.

It is found in the cell membrane. Its subcellular location is the apical cell membrane. The protein resides in the basolateral cell membrane. It localises to the mitochondrion membrane. The protein localises to the endomembrane system. It is found in the nucleus membrane. Its subcellular location is the nucleus outer membrane. It catalyses the reaction (R)-noradrenaline(out) = (R)-noradrenaline(in). The catalysed reaction is (R)-adrenaline(out) = (R)-adrenaline(in). The enzyme catalyses serotonin(out) = serotonin(in). It carries out the reaction dopamine(out) = dopamine(in). It catalyses the reaction histamine(out) = histamine(in). The catalysed reaction is tyramine(in) = tyramine(out). The enzyme catalyses guanidine(out) = guanidine(in). It carries out the reaction agmatine(out) = agmatine(in). It catalyses the reaction spermidine(in) = spermidine(out). The catalysed reaction is L-histidyl-L-proline diketopiperazine(in) = L-histidyl-L-proline diketopiperazine(out). The enzyme catalyses (R)-salsolinol(in) = (R)-salsolinol(out). Functionally, electrogenic voltage-dependent transporter that mediates the transport of a variety of organic cations such as endogenous bioactive amines, cationic drugs and xenobiotics. Cation cellular uptake or release is driven by the electrochemical potential, i.e. membrane potential and concentration gradient. Functions as a Na(+)- and Cl(-)-independent, bidirectional uniporter. Implicated in monoamine neurotransmitters uptake such as dopamine, adrenaline/epinephrine, noradrenaline/norepinephrine, homovanillic acid, histamine, serotonin and tyramine, thereby supporting a role in homeostatic regulation of aminergic neurotransmission in the brain. Transports dopaminergic neuromodulators cyclo(his-pro) and salsolinol with low efficiency. May be involved in the uptake and disposition of cationic compounds by renal clearance from the blood flow. May contribute to regulate the transport of cationic compounds in testis across the blood-testis-barrier. Mediates the transport of polyamine spermidine and putrescine. Mediates the bidirectional transport of polyamine agmatine. Also transports guanidine. May also mediate intracellular transport of organic cations, thereby playing a role in amine metabolism and intracellular signaling. This Mus musculus (Mouse) protein is Solute carrier family 22 member 3.